Here is a 121-residue protein sequence, read N- to C-terminus: Large ribosomal subunit protein uL22 (121 aa).

This sequence belongs to the universal ribosomal protein uL22 family. As to quaternary structure, part of the 50S ribosomal subunit.

Its function is as follows. This protein binds specifically to 23S rRNA; its binding is stimulated by other ribosomal proteins, e.g. L4, L17, and L20. It is important during the early stages of 50S assembly. It makes multiple contacts with different domains of the 23S rRNA in the assembled 50S subunit and ribosome. The globular domain of the protein is located near the polypeptide exit tunnel on the outside of the subunit, while an extended beta-hairpin is found that lines the wall of the exit tunnel in the center of the 70S ribosome. The protein is Large ribosomal subunit protein uL22 of Synechocystis sp. (strain ATCC 27184 / PCC 6803 / Kazusa).